The chain runs to 900 residues: Alanine--tRNA ligase (900 aa).

4 residues coordinate Zn(2+): His580, His584, Cys683, and His687.

The protein belongs to the class-II aminoacyl-tRNA synthetase family. The cofactor is Zn(2+).

It is found in the cytoplasm. It catalyses the reaction tRNA(Ala) + L-alanine + ATP = L-alanyl-tRNA(Ala) + AMP + diphosphate. In terms of biological role, catalyzes the attachment of alanine to tRNA(Ala) in a two-step reaction: alanine is first activated by ATP to form Ala-AMP and then transferred to the acceptor end of tRNA(Ala). Also edits incorrectly charged Ser-tRNA(Ala) and Gly-tRNA(Ala) via its editing domain. The polypeptide is Alanine--tRNA ligase (Mycolicibacterium paratuberculosis (strain ATCC BAA-968 / K-10) (Mycobacterium paratuberculosis)).